The following is a 175-amino-acid chain: NADH-ubiquinone oxidoreductase chain 6 (175 aa).

Transmembrane regions (helical) follow at residues 1–21 (MMYI…GFSS), 24–44 (SPVY…GIIM), 51–71 (LGLV…GYTI), 87–107 (VVLS…VWLF), 112–132 (ELVG…EGGF), and 148–168 (CGFW…FIAT).

Belongs to the complex I subunit 6 family. As to quaternary structure, core subunit of respiratory chain NADH dehydrogenase (Complex I) which is composed of 45 different subunits.

It localises to the mitochondrion inner membrane. The enzyme catalyses a ubiquinone + NADH + 5 H(+)(in) = a ubiquinol + NAD(+) + 4 H(+)(out). Functionally, core subunit of the mitochondrial membrane respiratory chain NADH dehydrogenase (Complex I) which catalyzes electron transfer from NADH through the respiratory chain, using ubiquinone as an electron acceptor. Essential for the catalytic activity and assembly of complex I. The polypeptide is NADH-ubiquinone oxidoreductase chain 6 (MT-ND6) (Elephas maximus (Indian elephant)).